The following is a 388-amino-acid chain: 2-epi-5-epi-valiolone synthase (388 aa).

NAD(+) is bound by residues 92–95 (ERNK), 124–128 (GIVAD), 148–149 (TT), Lys-161, Lys-170, and 188–191 (LLAT). The Zn(2+) site is built by Glu-203, His-267, and His-283.

Belongs to the sugar phosphate cyclases superfamily. EEVS-like family. NAD(+) serves as cofactor. Requires Co(2+) as cofactor. It depends on Zn(2+) as a cofactor.

The enzyme catalyses D-sedoheptulose 7-phosphate = 2-epi-5-epi-valiolone + phosphate. Functionally, catalyzes the cyclization of D-sedoheptulose 7-phosphate to 2-epi-5-epi-valiolone. Probably involved in acarbose biosynthesis. This Streptomyces glaucescens protein is 2-epi-5-epi-valiolone synthase.